We begin with the raw amino-acid sequence, 77 residues long: MARVCQVTGKAPMVGNKVSHANNRTKRRFLPNLQYRRFWVESENRFLRLRVSNAGLRLIDKNGIDAVLADLRARGEV.

This sequence belongs to the bacterial ribosomal protein bL28 family.

This chain is Large ribosomal subunit protein bL28, found in Dechloromonas aromatica (strain RCB).